The sequence spans 307 residues: Protoheme IX farnesyltransferase (307 aa).

A run of 9 helical transmembrane segments spans residues 28-48, 50-70, 100-120, 122-142, 149-169, 176-196, 218-238, 243-263, and 282-302; these read VTQLAVFCAVIGMFLATPGMV, WPVLIGGAVGIWLFAGAAFAI, ILLFSLVLGGAGMWTLHVFAN, LTMWLTFATFIGYAIIYTLLL, NIVIGGLSGAMPPALGWAAVA, AWILVLIIFTWTPPHFWALAL, FTLLHILLYTLIMVAATILPF, SGYLYLAVALVLGFGFLVHAW, and IVYLSLLFAALLIDHYFKFGP.

This sequence belongs to the UbiA prenyltransferase family. Protoheme IX farnesyltransferase subfamily.

The protein resides in the cell inner membrane. It catalyses the reaction heme b + (2E,6E)-farnesyl diphosphate + H2O = Fe(II)-heme o + diphosphate. The protein operates within porphyrin-containing compound metabolism; heme O biosynthesis; heme O from protoheme: step 1/1. Converts heme B (protoheme IX) to heme O by substitution of the vinyl group on carbon 2 of heme B porphyrin ring with a hydroxyethyl farnesyl side group. This is Protoheme IX farnesyltransferase from Ralstonia nicotianae (strain ATCC BAA-1114 / GMI1000) (Ralstonia solanacearum).